Reading from the N-terminus, the 116-residue chain is Ribonuclease P protein component (116 aa).

Belongs to the RnpA family. In terms of assembly, consists of a catalytic RNA component (M1 or rnpB) and a protein subunit.

It catalyses the reaction Endonucleolytic cleavage of RNA, removing 5'-extranucleotides from tRNA precursor.. In terms of biological role, RNaseP catalyzes the removal of the 5'-leader sequence from pre-tRNA to produce the mature 5'-terminus. It can also cleave other RNA substrates such as 4.5S RNA. The protein component plays an auxiliary but essential role in vivo by binding to the 5'-leader sequence and broadening the substrate specificity of the ribozyme. The protein is Ribonuclease P protein component of Geobacter sp. (strain M21).